Reading from the N-terminus, the 376-residue chain is MATCLLMSTFTFIRCSVLKWGSGSSLPQEQKEKITKGPGLGDFISGEVESTDSWEDYMGKLRLEKGDKRLRLPPWLKKEIPIGKNYHSLKGTLRELNLATVCEEAKCPNIGECWGGGEDKTATATIMVMGDTCTRGCRFCSVKTARSPPPLDPNEPVHTAEAISRWGVDYIVITSVDRDDVADGGSAHFSECVKEIKKRIPSMLVECLTPDFRGDMEAVATVAQSGLDVFAHNIETVKRLTPFVRDPRAKYDQSLQVLSHVKKTVPDMVTKSSIMLGLGETDQEVRTAMEDLRRAGVDCLTLGQYMQPTKRHLKVQEYVTPTKFKHWEEVGGEMGFAYTASGPLVRSSYRAGEFYIKNLLNKKRTEATLDTSSQES.

The [4Fe-4S] cluster site is built by cysteine 102, cysteine 107, cysteine 113, cysteine 133, cysteine 137, cysteine 140, and serine 348. The region spanning 116 to 337 is the Radical SAM core domain; sequence GGEDKTATAT…EEVGGEMGFA (222 aa).

It belongs to the radical SAM superfamily. Lipoyl synthase family. The cofactor is [4Fe-4S] cluster.

The protein resides in the mitochondrion. It catalyses the reaction [[Fe-S] cluster scaffold protein carrying a second [4Fe-4S](2+) cluster] + N(6)-octanoyl-L-lysyl-[protein] + 2 oxidized [2Fe-2S]-[ferredoxin] + 2 S-adenosyl-L-methionine + 4 H(+) = [[Fe-S] cluster scaffold protein] + N(6)-[(R)-dihydrolipoyl]-L-lysyl-[protein] + 4 Fe(3+) + 2 hydrogen sulfide + 2 5'-deoxyadenosine + 2 L-methionine + 2 reduced [2Fe-2S]-[ferredoxin]. Its pathway is protein modification; protein lipoylation via endogenous pathway; protein N(6)-(lipoyl)lysine from octanoyl-[acyl-carrier-protein]: step 2/2. Its function is as follows. Catalyzes the radical-mediated insertion of two sulfur atoms into the C-6 and C-8 positions of the octanoyl moiety bound to the lipoyl domains of lipoate-dependent enzymes, thereby converting the octanoylated domains into lipoylated derivatives. The protein is Lipoyl synthase, mitochondrial of Branchiostoma floridae (Florida lancelet).